A 159-amino-acid polypeptide reads, in one-letter code: MKVKLITVGKLKEKYLKDGIAEYIKRLGRFTKFESIELTDEKTPDNASEAENKAILDKEGQRILAKVGDRDYVIALAIEGKQFPSEQFAKELEQATLRGYSDITFIIGGSLGLSPKVKKRANQLMSFGLLTFPHQLMRLILVEQIYRAFMIQQGSPYHK.

Residues Leu-76, Gly-108, and Phe-127–Phe-132 each bind S-adenosyl-L-methionine.

The protein belongs to the RNA methyltransferase RlmH family. Homodimer.

The protein localises to the cytoplasm. It catalyses the reaction pseudouridine(1915) in 23S rRNA + S-adenosyl-L-methionine = N(3)-methylpseudouridine(1915) in 23S rRNA + S-adenosyl-L-homocysteine + H(+). Its function is as follows. Specifically methylates the pseudouridine at position 1915 (m3Psi1915) in 23S rRNA. The protein is Ribosomal RNA large subunit methyltransferase H of Streptococcus thermophilus (strain CNRZ 1066).